Consider the following 238-residue polypeptide: Ribonuclease PH (238 aa).

Phosphate contacts are provided by residues Arg-86 and 124 to 126 (GTR).

This sequence belongs to the RNase PH family. Homohexameric ring arranged as a trimer of dimers.

It catalyses the reaction tRNA(n+1) + phosphate = tRNA(n) + a ribonucleoside 5'-diphosphate. Its function is as follows. Phosphorolytic 3'-5' exoribonuclease that plays an important role in tRNA 3'-end maturation. Removes nucleotide residues following the 3'-CCA terminus of tRNAs; can also add nucleotides to the ends of RNA molecules by using nucleoside diphosphates as substrates, but this may not be physiologically important. Probably plays a role in initiation of 16S rRNA degradation (leading to ribosome degradation) during starvation. The polypeptide is Ribonuclease PH (Shigella flexneri serotype 5b (strain 8401)).